Reading from the N-terminus, the 193-residue chain is Probable nicotinate-nucleotide adenylyltransferase (193 aa).

This sequence belongs to the NadD family.

It catalyses the reaction nicotinate beta-D-ribonucleotide + ATP + H(+) = deamido-NAD(+) + diphosphate. The protein operates within cofactor biosynthesis; NAD(+) biosynthesis; deamido-NAD(+) from nicotinate D-ribonucleotide: step 1/1. Functionally, catalyzes the reversible adenylation of nicotinate mononucleotide (NaMN) to nicotinic acid adenine dinucleotide (NaAD). In Endomicrobium trichonymphae, this protein is Probable nicotinate-nucleotide adenylyltransferase.